Reading from the N-terminus, the 139-residue chain is Putative pre-16S rRNA nuclease (139 aa).

This sequence belongs to the YqgF nuclease family.

It is found in the cytoplasm. Its function is as follows. Could be a nuclease involved in processing of the 5'-end of pre-16S rRNA. The protein is Putative pre-16S rRNA nuclease of Phocaeicola vulgatus (strain ATCC 8482 / DSM 1447 / JCM 5826 / CCUG 4940 / NBRC 14291 / NCTC 11154) (Bacteroides vulgatus).